The following is a 519-amino-acid chain: Demethylepipodophyllotoxin synthase (519 aa).

The chain crosses the membrane as a helical span at residues cysteine 6 to tryptophan 26. Cysteine 458 lines the heme pocket.

Belongs to the cytochrome P450 family. Requires heme as cofactor. In terms of tissue distribution, rhizome-specific expression.

It localises to the membrane. The enzyme catalyses (-)-4'-desmethyl-deoxypodophyllotoxin + reduced [NADPH--hemoprotein reductase] + O2 = 4'-demethylepipodophyllotoxin + oxidized [NADPH--hemoprotein reductase] + H2O + H(+). It functions in the pathway aromatic compound metabolism; phenylpropanoid biosynthesis. Cytochrome P450 involved in the biosynthesis of etoposide, a chemotherapeutic compound of the topoisomerase inhibitor family. Catalyzes the hydroxylation of deoxypodophyllotoxin to form epipodophyllotoxin. This is Demethylepipodophyllotoxin synthase from Sinopodophyllum hexandrum (Himalayan may apple).